The primary structure comprises 305 residues: Protoheme IX farnesyltransferase 2 (305 aa).

The next 7 helical transmembrane spans lie at 38 to 58 (LITT…SFLG), 60 to 80 (LNTV…SCAV), 115 to 135 (ILLI…AAVI), 157 to 177 (INTV…WTAV), 181 to 201 (IGVV…PHFL), 236 to 256 (VACL…IVIL), and 285 to 305 (FVYS…FTLF).

The protein belongs to the UbiA prenyltransferase family. Protoheme IX farnesyltransferase subfamily. In terms of assembly, interacts with CtaA.

The protein resides in the cell membrane. The catalysed reaction is heme b + (2E,6E)-farnesyl diphosphate + H2O = Fe(II)-heme o + diphosphate. Its pathway is porphyrin-containing compound metabolism; heme O biosynthesis; heme O from protoheme: step 1/1. Functionally, converts heme B (protoheme IX) to heme O by substitution of the vinyl group on carbon 2 of heme B porphyrin ring with a hydroxyethyl farnesyl side group. This chain is Protoheme IX farnesyltransferase 2, found in Bacillus velezensis (strain DSM 23117 / BGSC 10A6 / LMG 26770 / FZB42) (Bacillus amyloliquefaciens subsp. plantarum).